Reading from the N-terminus, the 427-residue chain is MSRSEALFAQAQKHIPGGVNSPVRAFKSVGGTPLFFKHAEGAYVVDEDDKRYVDYVGSWGPMILGHGHPDVLDSVRRQLEHGLSYGAPTAMETEMADLVCSIVPSMEMVRMVSSGTEATMSAIRLARGYTGRDAIIKFEGCYHGHSDSLLVKAGSGLLTQGVPSSAGVPADFAKHTLTLPFNDIAAVEKTLAEVGQTVACIIVEPVAGNMNCVPPAPGFLEGLREQCDKHGVVLIFDEVMTGFRVSLGGAQGHYGIKPDLSTFGKIVGGGMPVGCFGGKREIMGCIAPLGPVYQAGTLSGNPLAMAAGLTTLKLISRPGFHAELTDYTSRMLDGLQQRADAAGVPFVTTQAGAMFGLYFSGADDIVTFEDVMASDAERFKRFFHLMLDGGVYLAPSAFEAGFTSIAHGDKELQITLDAAEKAFAALK.

N6-(pyridoxal phosphate)lysine is present on K265.

Belongs to the class-III pyridoxal-phosphate-dependent aminotransferase family. HemL subfamily. As to quaternary structure, homodimer. The cofactor is pyridoxal 5'-phosphate.

It localises to the cytoplasm. It carries out the reaction (S)-4-amino-5-oxopentanoate = 5-aminolevulinate. It functions in the pathway porphyrin-containing compound metabolism; protoporphyrin-IX biosynthesis; 5-aminolevulinate from L-glutamyl-tRNA(Glu): step 2/2. The chain is Glutamate-1-semialdehyde 2,1-aminomutase from Pseudomonas putida (strain ATCC 47054 / DSM 6125 / CFBP 8728 / NCIMB 11950 / KT2440).